The sequence spans 215 residues: Probable GTP-binding protein EngB (215 aa).

The EngB-type G domain maps to 30–204 (EGLEVAFAGR…QMVLAQWLGL (175 aa)). Residues 38–45 (GRSNAGKS), 64–68 (GRTQL), 82–85 (DLPG), 149–152 (TKAD), and 182–185 (LFSA) each bind GTP. 2 residues coordinate Mg(2+): Ser45 and Thr66.

The protein belongs to the TRAFAC class TrmE-Era-EngA-EngB-Septin-like GTPase superfamily. EngB GTPase family. Requires Mg(2+) as cofactor.

Its function is as follows. Necessary for normal cell division and for the maintenance of normal septation. The sequence is that of Probable GTP-binding protein EngB from Pseudomonas paraeruginosa (strain DSM 24068 / PA7) (Pseudomonas aeruginosa (strain PA7)).